A 130-amino-acid polypeptide reads, in one-letter code: Protein lgg-2 (130 aa).

G130 carries Phosphatidylethanolamine amidated glycine lipidation.

It belongs to the ATG8 family. May interact with vps-39. Interacts with lgg-3; the interaction is direct. Interacts with atg-16.1 (via WD domain) and atg-16.2 (via WD 5-6 repeats); the interactions are direct. Interacts with sepa-1 (via the LIR motifs); the interaction is direct. Interacts with sqst-1 (via the LIR motifs); the interaction is direct. Interacts with epg-2 (via the LIR motifs); the interaction is weak. Interacts with atg-7; the interaction is direct. Interacts with atg-3. The interaction with atg-7 and atg-3 may be required for the lipidation of lgg-2. This protein is subject to lipidation. Lipidation is regulated by lgg-1.

It is found in the cytoplasmic vesicle. Its subcellular location is the autophagosome. The protein localises to the cytoplasm. The protein resides in the cell membrane. Ubiquitin-like modifier involved in the formation of autophagosomal vacuoles (autophagosomes). When lipidated mediates tethering between adjacent membranes and stimulates membrane fusion. Less effective at promoting membrane fusion than lgg-1. Acts upstream of the autophagy protein epg-5 in the aggrephagy pathway, which is the macroautophagic degradation of ubiquitinated protein aggregates, and preferentially interacts with autophagy proteins and substrates containing LIR motifs to mediate autophagosome formation and protein aggregate degradation. In particular binds to components of an atg-5-lgg-3-atg-16 complex to regulate autophagosome formation and cargo sequestration. Required for the degradation of specific sqst-1-containing aggregates during embryogenesis and the early stages of larval development. Involved in allophagy, which is an autophagic process in which paternal mitochondria and organelles are degraded during fertilization, and moreover is required for the degradation of lgg-1-positive allophagic autophagosomes in embryos. Involved in xenophagy, the autophagy-mediated degradation of pathogens and pathogen products, such as toxins. Also plays a role in membrane-pore repair. Through HOPS complex subunit vps-39, tethers lysosomes with autophagosomes to form autolysosomes. Plays a role in the distribution and clearance of germ cell specific P-granules from somatic cells to ensure exclusive localization of the P-granules in germ cells. Essential for dauer development and life-span extension. This chain is Protein lgg-2, found in Caenorhabditis elegans.